A 315-amino-acid polypeptide reads, in one-letter code: Zinc metalloproteinase nas-4 (315 aa).

A signal peptide spans 1–20; sequence MMTIQRYSLVFCAIFATCWT. A glycan (N-linked (GlcNAc...) asparagine) is linked at Asn-71. The 196-residue stretch at 95 to 290 folds into the Peptidase M12A domain; it reads NAIKQIYRRW…RKINKLYNCP (196 aa). Cystine bridges form between Cys-137–Cys-289 and Cys-160–Cys-179. His-187 contacts Zn(2+). Residue Glu-188 is part of the active site. Residues His-191 and His-197 each contribute to the Zn(2+) site. Residues 291–315 are disordered; it reads GVSGNNNNNNNNQINSNSIVNHPQV.

Requires Zn(2+) as cofactor. As to expression, digestive tract. Found in the pharynx cells of the procorpus, metacorpus, isthmus and terminal bulb, and in the terminal bulb lumen.

The protein resides in the secreted. In terms of biological role, metalloprotease. May be involved in digestion. In Caenorhabditis elegans, this protein is Zinc metalloproteinase nas-4 (nas-4).